The following is a 793-amino-acid chain: DNA mismatch repair protein MutS (793 aa).

ATP is bound at residue 589–596 (GPNMSGKS).

Belongs to the DNA mismatch repair MutS family.

In terms of biological role, this protein is involved in the repair of mismatches in DNA. It is possible that it carries out the mismatch recognition step. This protein has a weak ATPase activity. The protein is DNA mismatch repair protein MutS of Thermotoga sp. (strain RQ2).